The primary structure comprises 396 residues: Cyclic GMP-AMP synthase-like receptor (396 aa).

ATP is bound by residues S63 and E75–D77. Positions 75, 77, and 194 each coordinate Mg(2+). Residue D194 participates in GTP binding. Residues Q241–E244, K262, and S275–K279 contribute to the ATP site. 3 residues coordinate Mn(2+): V286, E287, and D292. Residues I376 to M396 are disordered. The span at G380–M396 shows a compositional bias: polar residues.

The protein belongs to the mab-21 family. The cofactor is Mg(2+). Requires Mn(2+) as cofactor.

The catalysed reaction is GTP + ATP = 2',3'-cGAMP + 2 diphosphate. The enzyme catalyses GTP + ATP = pppGp(2'-5')A + diphosphate. It catalyses the reaction pppGp(2'-5')A = 2',3'-cGAMP + diphosphate. In terms of biological role, nucleotidyltransferase that catalyzes the formation of cyclic GMP-AMP (2',3'-cGAMP) from ATP and GTP and plays a key role in innate immunity. Acts as a key sensor of double-stranded RNA (dsRNA), the presence of dsRNA in the cytoplasm being a danger signal that triggers the immune responses. Directly binds dsRNA, activating the nucleotidyltransferase activity, leading to synthesis of 2',3'-cGAMP, a second messenger that binds to and activates Sting, thereby triggering the immune response via activation of the NF-kappa-B transcription factor. This Aethina tumida (Small hive beetle) protein is Cyclic GMP-AMP synthase-like receptor.